A 346-amino-acid chain; its full sequence is Mannonate dehydratase (346 aa).

The protein belongs to the mannonate dehydratase family. Requires Fe(2+) as cofactor. The cofactor is Mn(2+).

It catalyses the reaction D-mannonate = 2-dehydro-3-deoxy-D-gluconate + H2O. It participates in carbohydrate metabolism; pentose and glucuronate interconversion. Catalyzes the dehydration of D-mannonate. The sequence is that of Mannonate dehydratase from Cupriavidus taiwanensis (strain DSM 17343 / BCRC 17206 / CCUG 44338 / CIP 107171 / LMG 19424 / R1) (Ralstonia taiwanensis (strain LMG 19424)).